The chain runs to 965 residues: Translation initiation factor IF-2 (965 aa).

The segment at 94–375 (RTFVRRDEAA…RGKHQESTTF (282 aa)) is disordered. Residues 104–115 (EQAAEATGNGQE) are compositionally biased toward low complexity. Positions 121–177 (ELQRREEEARHEAELLEKQAQELKARQEQLAREEAERQAREQAAEAERRRAEEEAAK) are enriched in basic and acidic residues. Residues 181-191 (AAVAEAAAAAR) are compositionally biased toward low complexity. Over residues 192–253 (EQAEQERASQ…KAEAEARAIR (62 aa)) the composition is skewed to basic and acidic residues. Residues 267–276 (PEPPPKPAEA) are compositionally biased toward pro residues. A compositionally biased stretch (low complexity) spans 303 to 320 (KKPAPAAAAQPAATTQPA). A compositionally biased stretch (gly residues) spans 351 to 364 (TSGGVDRGWRGGPK). Positions 465–634 (PRPPVVTVMG…LLQAEVLELK (170 aa)) constitute a tr-type G domain. The segment at 474–481 (GHVDHGKT) is G1. 474–481 (GHVDHGKT) contacts GTP. The G2 stretch occupies residues 499–503 (GITQH). The interval 520–523 (DTPG) is G3. Residues 520–524 (DTPGH) and 574–577 (NKID) each bind GTP. The tract at residues 574 to 577 (NKID) is G4. A G5 region spans residues 610–612 (SAK).

The protein belongs to the TRAFAC class translation factor GTPase superfamily. Classic translation factor GTPase family. IF-2 subfamily.

It localises to the cytoplasm. One of the essential components for the initiation of protein synthesis. Protects formylmethionyl-tRNA from spontaneous hydrolysis and promotes its binding to the 30S ribosomal subunits. Also involved in the hydrolysis of GTP during the formation of the 70S ribosomal complex. This is Translation initiation factor IF-2 from Paraburkholderia phymatum (strain DSM 17167 / CIP 108236 / LMG 21445 / STM815) (Burkholderia phymatum).